A 403-amino-acid chain; its full sequence is Phosphoglycerate kinase (403 aa).

Substrate contacts are provided by residues 21–23 (DFN), Arg-36, 59–62 (HLGR), Arg-119, and Arg-154. ATP-binding positions include Lys-207, Gly-299, Glu-330, and 357–360 (GGDA).

Belongs to the phosphoglycerate kinase family. Monomer.

The protein localises to the cytoplasm. The enzyme catalyses (2R)-3-phosphoglycerate + ATP = (2R)-3-phospho-glyceroyl phosphate + ADP. The protein operates within carbohydrate degradation; glycolysis; pyruvate from D-glyceraldehyde 3-phosphate: step 2/5. The sequence is that of Phosphoglycerate kinase from Chlamydia caviae (strain ATCC VR-813 / DSM 19441 / 03DC25 / GPIC) (Chlamydophila caviae).